We begin with the raw amino-acid sequence, 340 residues long: Entry-fusion complex protein OPG094 (340 aa).

Gly-2 carries N-myristoyl glycine; by host lipidation. Topologically, residues 2–319 (GGRVSVELPK…VQHNIKHSFD (318 aa)) are virion surface. A helical; Signal-anchor for type II membrane protein membrane pass occupies residues 320-340 (LKLHLISLLSLLVIWILIVAI).

It belongs to the orthopoxvirus OPG086 family. As to quaternary structure, interacts with OPG143. Component of the entry fusion complex (EFC) composed of OPG053, OPG076, OPG086, OPG094, OPG095, OPG099, OPG107, OPG143, OPG104, OPG147 and OPG155. Except for OPG095 and OPG053, each of the EFC proteins is required for assembly or stability of the complex. In terms of processing, unglycosylated because produced in viral factories instead of the classic ER -Golgi route.

The protein localises to the virion membrane. Functionally, component of the entry fusion complex (EFC), which consists of 11 proteins. During cell infection, this complex mediates entry of the virion core into the host cytoplasm by a two-step mechanism consisting of lipid mixing of the viral and cellular membranes and subsequent pore formation. This Homo sapiens (Human) protein is Entry-fusion complex protein OPG094 (OPG094).